The primary structure comprises 417 residues: MTVAETRARNLSIPAPSQITRPALEGVKETMVLNMGPHHPSTHGVLRLVVELDGETVVDVAPDIGYLHTGIEKTMESKTYQKAVVLTDRTDYLAPLSNNLSYVLAVEKLLGCEVPERATVARVLLVELQRIASHLVWLGTHALDLAAMSVFLYGFREREQILDIFELVSGARMMTSYFRVGGLAYDLPIEFDAAVEAFLAIMPGRIDEYEALLTDNPLWIERTQGIGAIDSEAAIALGLTGPGLRATGVAWDLRKTMPYCGYETYSFAVPTATHGDIYDRYLVRMAEMRESVSICRQALQRLRDIGPGPYMTLDRKIAPPPKSEITQSMEALIHHFKLWTEGFKPPRGDALAAVESPRGELATYIVSDGSAKPYRVHFRAPSFVNLQSLPHMARGHLVADLVALIASLDPVLGEVDR.

Belongs to the complex I 49 kDa subunit family. NDH-1 is composed of 14 different subunits. Subunits NuoB, C, D, E, F, and G constitute the peripheral sector of the complex.

The protein resides in the cell membrane. The catalysed reaction is a quinone + NADH + 5 H(+)(in) = a quinol + NAD(+) + 4 H(+)(out). Its function is as follows. NDH-1 shuttles electrons from NADH, via FMN and iron-sulfur (Fe-S) centers, to quinones in the respiratory chain. The immediate electron acceptor for the enzyme in this species is believed to be ubiquinone. Couples the redox reaction to proton translocation (for every two electrons transferred, four hydrogen ions are translocated across the cytoplasmic membrane), and thus conserves the redox energy in a proton gradient. The sequence is that of NADH-quinone oxidoreductase subunit D 1 from Roseiflexus castenholzii (strain DSM 13941 / HLO8).